The chain runs to 168 residues: Cell division inhibitor SulA (168 aa).

Residues 105 to 111 (ALQTGNY) form a ftsZ binding region.

Belongs to the SulA family. In terms of assembly, interacts with FtsZ. Is rapidly cleaved and degraded by the Lon protease once DNA damage is repaired.

Component of the SOS system and an inhibitor of cell division. Accumulation of SulA causes rapid cessation of cell division and the appearance of long, non-septate filaments. In the presence of GTP, binds a polymerization-competent form of FtsZ in a 1:1 ratio, thus inhibiting FtsZ polymerization and therefore preventing it from participating in the assembly of the Z ring. This mechanism prevents the premature segregation of damaged DNA to daughter cells during cell division. This chain is Cell division inhibitor SulA, found in Erwinia pyrifoliae (strain DSM 12163 / CIP 106111 / Ep16/96).